A 379-amino-acid chain; its full sequence is Cytochrome b (379 aa).

4 helical membrane-spanning segments follow: residues 33 to 53 (FGSL…FLAM), 77 to 98 (WTIR…FIHV), 113 to 133 (WNVG…GYVL), and 178 to 198 (FFAL…IHLL). The heme b site is built by histidine 83 and histidine 97. Residues histidine 182 and histidine 196 each contribute to the heme b site. An a ubiquinone-binding site is contributed by histidine 201. Transmembrane regions (helical) follow at residues 226-246 (TKDF…ALFY), 288-308 (LGGV…PFLQ), 320-340 (LSQF…WIGG), and 347-367 (FINI…FIMP).

It belongs to the cytochrome b family. In terms of assembly, the cytochrome bc1 complex contains 11 subunits: 3 respiratory subunits (MT-CYB, CYC1 and UQCRFS1), 2 core proteins (UQCRC1 and UQCRC2) and 6 low-molecular weight proteins (UQCRH/QCR6, UQCRB/QCR7, UQCRQ/QCR8, UQCR10/QCR9, UQCR11/QCR10 and a cleavage product of UQCRFS1). This cytochrome bc1 complex then forms a dimer. It depends on heme b as a cofactor.

The protein localises to the mitochondrion inner membrane. Its function is as follows. Component of the ubiquinol-cytochrome c reductase complex (complex III or cytochrome b-c1 complex) that is part of the mitochondrial respiratory chain. The b-c1 complex mediates electron transfer from ubiquinol to cytochrome c. Contributes to the generation of a proton gradient across the mitochondrial membrane that is then used for ATP synthesis. The protein is Cytochrome b (MT-CYB) of Lepilemur ankaranensis (Ankarana sportive lemur).